The chain runs to 90 residues: U7-theraphotoxin-Hhn1j (90 aa).

The first 19 residues, 1-19 (MKTAIFTVVLALAVFAVLS), serve as a signal peptide directing secretion. The propeptide occupies 20 to 50 (FGWEANEKALSEEFTELIHEKEAASETEARE). 3 disulfide bridges follow: C51–C65, C58–C70, and C64–C81.

Belongs to the neurotoxin 10 (Hwtx-1) family. 13 (Hntx-13) subfamily. In terms of tissue distribution, expressed by the venom gland.

It localises to the secreted. Its function is as follows. Ion channel inhibitor. The polypeptide is U7-theraphotoxin-Hhn1j (Cyriopagopus hainanus (Chinese bird spider)).